The primary structure comprises 155 residues: MGDMPFWKTKSLDEMTNAEWESLCDGCGLCCLNKLEDWDTGEIAWTSIRCTLLDGENCRCKDYDNRQATVPDCVQLTPKAVREISWLPPTCGYRLVAEGRDLYWWHPLVSGDPETVHAAGISVRGRTVAEDGIEIEDYEDYLVTWPLEVGLEPVE.

This sequence belongs to the UPF0260 family.

The polypeptide is UPF0260 protein NGR_c07710 (Sinorhizobium fredii (strain NBRC 101917 / NGR234)).